Consider the following 202-residue polypeptide: MIAFLSGRVVSRGAETAVIDVGGVGMTVHCTPAALARLRVGEEATVATALVVREDSLTLFGFADDDERDTFERLQTASGVGPRLALAMLSVHTPDALRRAIATEDTAALTRVPGIGKKGAQRIVLELKGKLGEPGGDTAATPEQSAAAAPRNWRAQVVSGLVNLGWSTREAEAAADAVAAEAGEQPDVAALLRSALRRLSRA.

A domain I region spans residues 1–63 (MIAFLSGRVV…EDSLTLFGFA (63 aa)). Residues 64–142 (DDDERDTFER…EPGGDTAATP (79 aa)) form a domain II region. A flexible linker region spans residues 143–152 (EQSAAAAPRN). The segment at 152–202 (NWRAQVVSGLVNLGWSTREAEAAADAVAAEAGEQPDVAALLRSALRRLSRA) is domain III.

The protein belongs to the RuvA family. In terms of assembly, homotetramer. Forms an RuvA(8)-RuvB(12)-Holliday junction (HJ) complex. HJ DNA is sandwiched between 2 RuvA tetramers; dsDNA enters through RuvA and exits via RuvB. An RuvB hexamer assembles on each DNA strand where it exits the tetramer. Each RuvB hexamer is contacted by two RuvA subunits (via domain III) on 2 adjacent RuvB subunits; this complex drives branch migration. In the full resolvosome a probable DNA-RuvA(4)-RuvB(12)-RuvC(2) complex forms which resolves the HJ.

It localises to the cytoplasm. In terms of biological role, the RuvA-RuvB-RuvC complex processes Holliday junction (HJ) DNA during genetic recombination and DNA repair, while the RuvA-RuvB complex plays an important role in the rescue of blocked DNA replication forks via replication fork reversal (RFR). RuvA specifically binds to HJ cruciform DNA, conferring on it an open structure. The RuvB hexamer acts as an ATP-dependent pump, pulling dsDNA into and through the RuvAB complex. HJ branch migration allows RuvC to scan DNA until it finds its consensus sequence, where it cleaves and resolves the cruciform DNA. This Thermobifida fusca (strain YX) protein is Holliday junction branch migration complex subunit RuvA.